The chain runs to 96 residues: UPF0184 protein CG14818 (96 aa).

2 disordered regions span residues 1–28 and 70–96; these read MSPKNNHDPSSSGDSGNTNVQEADLQEM and IAEENDNAPESGDDNMDGQAGSEAAPK. Residues 8-21 are compositionally biased toward polar residues; it reads DPSSSGDSGNTNVQ. The stretch at 21-77 forms a coiled coil; it reads QEADLQEMEDVNNSLDALSCALDAVEQRTDDIMSQLRELLNSNREIRRLIAEENDNA. The segment covering 72–85 has biased composition (acidic residues); it reads EENDNAPESGDDNM.

This sequence belongs to the UPF0184 (EST00098) family.

This is UPF0184 protein CG14818 from Drosophila melanogaster (Fruit fly).